We begin with the raw amino-acid sequence, 253 residues long: ATP synthase subunit a (253 aa).

6 helical membrane-spanning segments follow: residues Ser34–Tyr54, Tyr89–Ile109, His118–Ile138, Leu156–Ser178, Leu203–Leu223, and Leu226–Leu246.

It belongs to the ATPase A chain family. As to quaternary structure, F-type ATPases have 2 components, CF(1) - the catalytic core - and CF(0) - the membrane proton channel. CF(1) has five subunits: alpha(3), beta(3), gamma(1), delta(1), epsilon(1). CF(0) has three main subunits: a, b and c.

It is found in the mitochondrion inner membrane. Functionally, mitochondrial membrane ATP synthase (F(1)F(0) ATP synthase or Complex V) produces ATP from ADP in the presence of a proton gradient across the membrane which is generated by electron transport complexes of the respiratory chain. F-type ATPases consist of two structural domains, F(1) - containing the extramembraneous catalytic core and F(0) - containing the membrane proton channel, linked together by a central stalk and a peripheral stalk. During catalysis, ATP synthesis in the catalytic domain of F(1) is coupled via a rotary mechanism of the central stalk subunits to proton translocation. Key component of the proton channel; it may play a direct role in the translocation of protons across the membrane. The chain is ATP synthase subunit a (ATP6) from Chondrus crispus (Carrageen Irish moss).